Consider the following 477-residue polypeptide: Peptidyl-prolyl cis-trans isomerase FKBP53 (477 aa).

Disordered regions lie at residues D104–Q135 and A153–T366. A compositionally biased stretch (basic residues) spans K264 to K274. Residues I299–S321 are compositionally biased toward polar residues. The segment covering K322–K331 has biased composition (basic and acidic residues). Polar residues predominate over residues V351–T366. In terms of domain architecture, PPIase FKBP-type spans G389–Q477.

This sequence belongs to the FKBP-type PPIase family. Interacts with histone H3. In terms of tissue distribution, broadly expressed in leaves, flowers, stems and roots. Detected in root apical meristem region and pollen.

It localises to the nucleus. The catalysed reaction is [protein]-peptidylproline (omega=180) = [protein]-peptidylproline (omega=0). Its function is as follows. PPIases accelerate the folding of proteins. It catalyzes the cis-trans isomerization of proline imidic peptide bonds in oligopeptides. Histone chaperone possibly involved in H3/H4 deposition to the nucleosome. Associates with 18S rDNA chromatin and negatively regulates the level of its expression. The sequence is that of Peptidyl-prolyl cis-trans isomerase FKBP53 (FKBP53) from Arabidopsis thaliana (Mouse-ear cress).